The following is a 38-amino-acid chain: Large ribosomal subunit protein bL36 (38 aa).

It belongs to the bacterial ribosomal protein bL36 family.

This chain is Large ribosomal subunit protein bL36, found in Bacteroides fragilis (strain ATCC 25285 / DSM 2151 / CCUG 4856 / JCM 11019 / LMG 10263 / NCTC 9343 / Onslow / VPI 2553 / EN-2).